Reading from the N-terminus, the 962-residue chain is Spliceosome associated factor 3, U4/U6 recycling protein (962 aa).

Residues 1 to 21 (MATTAASSASEPEVEPQAGPE) are compositionally biased toward low complexity. Positions 1–92 (MATTAASSAS…EDEWEYDEEE (92 aa)) are disordered. Position 2 is an N-acetylalanine (Ala-2). The tract at residues 2–352 (ATTAASSASE…LVPDLWIRYS (351 aa)) is mediates interaction with PRPF3. A Phosphoserine modification is found at Ser-10. Residues 81–92 (AGEDEWEYDEEE) are compositionally biased toward acidic residues. HAT repeat units follow at residues 127–159 (GELS…DEIS), 165–196 (LDRE…YSVG), 202–238 (GGLE…FESA), 243–276 (ARLE…WSEE), 325–357 (GDPA…YLDR), 360–392 (KVKD…AMER), 395–431 (LDHQ…YLRR), 441–474 (KELE…PSCL), and 488–521 (NNMQ…LERA). Ser-216 bears the Phosphoserine mark. A required for interaction with USP4 region spans residues 488–521 (NNMQKARELWDSIMTRGNAKYANMWLEYYNLERA). A necessary and sufficient for U6 snRNA binding region spans residues 538-952 (CTSDYPEHVC…VATEAPKMSN (415 aa)). A coiled-coil region spans residues 559–618 (TLEDWDLAIQKTETRLARVNEQRMKAAEKEAALVQQEEEKAEQRKKVRAEKKALKKKKKT). Residues 591–602 (LVQQEEEKAEQR) show a composition bias toward basic and acidic residues. Residues 591 to 696 (LVQQEEEKAE…SLKRDMPKVA (106 aa)) form a disordered region. Residues 601–670 (QRKKVRAEKK…KEETELSGKC (70 aa)) are required for nuclear localization. The short motif at 602–609 (RKKVRAEK) is the Nuclear localization signal element. Over residues 603–618 (KKVRAEKKALKKKKKT) the composition is skewed to basic residues. Over residues 627–640 (DEDEENEWGEEEEE) the composition is skewed to acidic residues. A Phosphoserine modification is found at Ser-651. Over residues 680–696 (KQKEKAASLKRDMPKVA) the composition is skewed to basic and acidic residues. The RRM 1 domain occupies 704-782 (VTVFVSNLPY…RPMFVSPCVD (79 aa)). A phosphoserine mark is found at Ser-795 and Ser-852. Residues 801–878 (HKLFISGLPF…NVIKVAISNP (78 aa)) enclose the RRM 2 domain. The disordered stretch occupies residues 880-962 (QRKVPEKPEV…ADFAKLLLRK (83 aa)). At Arg-906 the chain carries Omega-N-methylarginine.

As to quaternary structure, component of the 7SK snRNP complex at least composed of P-TEFb (composed of CDK9 and CCNT1/cyclin-T1), HEXIM1, HEXIM2, BCDIN3, SART3 proteins and 7SK and U6 snRNAs. Interacts with AGO1 and AGO2. Interacts with PRPF3 and USP4; the interaction with PRPF3 is direct and recruits USP4 to its substrate PRPF3. Interacts with USP15; the interaction is direct. Ubiquitously expressed, with low level of expression in liver, heart and skeletal. Also detected in hematopoietic cells (at protein level).

The protein localises to the nucleus. It localises to the nucleoplasm. It is found in the cajal body. The protein resides in the nucleus speckle. Its subcellular location is the cytoplasm. Functionally, U6 snRNP-binding protein that functions as a recycling factor of the splicing machinery. Promotes the initial reassembly of U4 and U6 snRNPs following their ejection from the spliceosome during its maturation. Also binds U6atac snRNPs and may function as a recycling factor for U4atac/U6atac spliceosomal snRNP, an initial step in the assembly of U12-type spliceosomal complex. The U12-type spliceosomal complex plays a role in the splicing of introns with non-canonical splice sites. May also function as a substrate-targeting factor for deubiquitinases like USP4 and USP15. Recruits USP4 to ubiquitinated PRPF3 within the U4/U5/U6 tri-snRNP complex, promoting PRPF3 deubiquitination and thereby regulating the spliceosome U4/U5/U6 tri-snRNP spliceosomal complex disassembly. May also recruit the deubiquitinase USP15 to histone H2B and mediate histone deubiquitination, thereby regulating gene expression and/or DNA repair. May play a role in hematopoiesis probably through transcription regulation of specific genes including MYC. The sequence is that of Spliceosome associated factor 3, U4/U6 recycling protein from Mus musculus (Mouse).